A 240-amino-acid chain; its full sequence is Phosphatidylserine decarboxylase proenzyme (240 aa).

S209 functions as the Schiff-base intermediate with substrate; via pyruvic acid in the catalytic mechanism. S209 is modified (pyruvic acid (Ser); by autocatalysis).

It belongs to the phosphatidylserine decarboxylase family. PSD-A subfamily. As to quaternary structure, heterodimer of a large membrane-associated beta subunit and a small pyruvoyl-containing alpha subunit. Requires pyruvate as cofactor. Post-translationally, is synthesized initially as an inactive proenzyme. Formation of the active enzyme involves a self-maturation process in which the active site pyruvoyl group is generated from an internal serine residue via an autocatalytic post-translational modification. Two non-identical subunits are generated from the proenzyme in this reaction, and the pyruvate is formed at the N-terminus of the alpha chain, which is derived from the carboxyl end of the proenzyme. The post-translation cleavage follows an unusual pathway, termed non-hydrolytic serinolysis, in which the side chain hydroxyl group of the serine supplies its oxygen atom to form the C-terminus of the beta chain, while the remainder of the serine residue undergoes an oxidative deamination to produce ammonia and the pyruvoyl prosthetic group on the alpha chain.

The protein resides in the cell membrane. The catalysed reaction is a 1,2-diacyl-sn-glycero-3-phospho-L-serine + H(+) = a 1,2-diacyl-sn-glycero-3-phosphoethanolamine + CO2. It functions in the pathway phospholipid metabolism; phosphatidylethanolamine biosynthesis; phosphatidylethanolamine from CDP-diacylglycerol: step 2/2. Its function is as follows. Catalyzes the formation of phosphatidylethanolamine (PtdEtn) from phosphatidylserine (PtdSer). The sequence is that of Phosphatidylserine decarboxylase proenzyme from Mycobacterium marinum (strain ATCC BAA-535 / M).